We begin with the raw amino-acid sequence, 364 residues long: Developmentally-regulated GTP-binding protein 2 (364 aa).

A (3S)-3-hydroxylysine modification is found at Lys-21. The 226-residue stretch at 63-288 (ARVALIGFPS…LLEMLWEYLA (226 aa)) folds into the OBG-type G domain. GTP is bound by residues 69–76 (GFPSVGKS), 94–98 (FTTLT), 115–118 (DLPG), 246–249 (NKID), and 269–271 (SCG). Residues Ser-76 and Thr-96 each coordinate Mg(2+). The TGS domain occupies 288-363 (ALTCIYTKKR…EHEDVIQIVK (76 aa)).

Belongs to the TRAFAC class OBG-HflX-like GTPase superfamily. OBG GTPase family. Interacts with RWDD1; this interaction confers protection to polyubiquitination and proteolytic degradation. Interacts with JMJD7; this interaction is direct. Mg(2+) is required as a cofactor. Post-translationally, polyubiquitinated. In terms of processing, hydroxylated (with S stereochemistry) at C-3 of Lys-21 by JMJD7. As to expression, fairly high levels in liver, heart, kidney, and brain. Very low levels in lung, spleen, testis and skeletal muscle.

It is found in the nucleus. It localises to the cytoplasm. It catalyses the reaction GTP + H2O = GDP + phosphate + H(+). Catalyzes the conversion of GTP to GDP through hydrolysis of the gamma-phosphate bond in GTP. When hydroxylated at C-3 of 'Lys-21' by JMJD7, may bind to RNA and play a role in translation. In Mus musculus (Mouse), this protein is Developmentally-regulated GTP-binding protein 2 (Drg2).